The sequence spans 210 residues: Large ribosomal subunit protein uL4 (210 aa).

Over residues 47 to 64 the composition is skewed to polar residues; sequence SRQGTRSQKSRSEVSGSN. The segment at 47–83 is disordered; the sequence is SRQGTRSQKSRSEVSGSNKKPWRQKGTGRARSGSVKS.

Belongs to the universal ribosomal protein uL4 family. Part of the 50S ribosomal subunit.

Functionally, one of the primary rRNA binding proteins, this protein initially binds near the 5'-end of the 23S rRNA. It is important during the early stages of 50S assembly. It makes multiple contacts with different domains of the 23S rRNA in the assembled 50S subunit and ribosome. Its function is as follows. Forms part of the polypeptide exit tunnel. The chain is Large ribosomal subunit protein uL4 from Blochmanniella pennsylvanica (strain BPEN).